We begin with the raw amino-acid sequence, 961 residues long: Probable inorganic carbon transporter subunit DabA (961 aa).

Zn(2+)-binding residues include Cys-406, Asp-408, His-653, and Cys-668.

This sequence belongs to the inorganic carbon transporter (TC 9.A.2) DabA family. Forms a complex with DabB. The cofactor is Zn(2+).

The protein localises to the cell inner membrane. Its function is as follows. Part of an energy-coupled inorganic carbon pump. This Hydrogenobaculum sp. (strain Y04AAS1) protein is Probable inorganic carbon transporter subunit DabA.